We begin with the raw amino-acid sequence, 125 residues long: Small ribosomal subunit protein uS12m (125 aa).

2 disordered regions span residues 1–23 (MPTL…RTRA) and 104–125 (LMGI…PKSI). Residues 10–23 (HGREEKRRTDRTRA) are compositionally biased toward basic and acidic residues.

It belongs to the universal ribosomal protein uS12 family.

It localises to the mitochondrion. In terms of biological role, protein S12 is involved in the translation initiation step. This is Small ribosomal subunit protein uS12m (RPS12) from Raphanus sativus (Radish).